The sequence spans 345 residues: Platelet-derived growth factor C (345 aa).

Residues 1 to 22 (MLLLGLLLLTSALAGRRHGAAA) form the signal peptide. A CUB domain is found at 46 to 163 (HEKIITVTSN…PGFCIHYTLL (118 aa)). A glycan (N-linked (GlcNAc...) asparagine) is linked at Asn-55. Cystine bridges form between Cys-104/Cys-124, Cys-250/Cys-294, Cys-280/Cys-335, and Cys-287/Cys-337.

Belongs to the PDGF/VEGF growth factor family. In terms of assembly, homodimer; disulfide-linked. Interacts with PDGFRA homodimers, and with heterodimers formed by PDGFRA and PDGFRB. Proteolytic removal of the N-terminal CUB domain releasing the core domain is necessary for unmasking the receptor-binding epitopes of the core domain. Cleavage after basic residues in the hinge region (region connecting the CUB and growth factor domains) gives rise to the receptor-binding form.

Its subcellular location is the secreted. Growth factor that plays an essential role in the regulation of embryonic development, cell proliferation, cell migration, survival and chemotaxis. Potent mitogen and chemoattractant for cells of mesenchymal origin. Required for normal skeleton formation during embryonic development. Required for normal skin morphogenesis during embryonic development. Plays an important role in wound healing, in angiogenesis and blood vessel development. The protein is Platelet-derived growth factor C (PDGFC) of Gallus gallus (Chicken).